A 319-amino-acid chain; its full sequence is HTH-type transcriptional regulator YidZ (319 aa).

One can recognise an HTH lysR-type domain in the interval 8–65 (LDLNLLLCLQLLMQERSVTKAAKRMNVTPSAVSKSLAKLRAWFDDPLFVNSPLGLSPT). Residues 25–44 (VTKAAKRMNVTPSAVSKSLA) constitute a DNA-binding region (H-T-H motif).

This sequence belongs to the LysR transcriptional regulatory family.

Involved in anaerobic NO protection. This Escherichia coli O157:H7 (strain EC4115 / EHEC) protein is HTH-type transcriptional regulator YidZ.